The primary structure comprises 219 residues: Ion-translocating oxidoreductase complex subunit G (219 aa).

A helical transmembrane segment spans residues 25 to 45 (GLLLGLFSLVSALMLALASDA). The residue at position 187 (T187) is an FMN phosphoryl threonine.

This sequence belongs to the RnfG family. In terms of assembly, the complex is composed of six subunits: RnfA, RnfB, RnfC, RnfD, RnfE and RnfG. The cofactor is FMN.

The protein localises to the cellular chromatophore membrane. Part of a membrane-bound complex that couples electron transfer with translocation of ions across the membrane. This chain is Ion-translocating oxidoreductase complex subunit G, found in Cereibacter sphaeroides (strain ATCC 17029 / ATH 2.4.9) (Rhodobacter sphaeroides).